The following is a 177-amino-acid chain: B-phycoerythrin beta chain (177 aa).

Residues C50 and C61 each contribute to the phycourobilin site. Residue N72 is modified to N4-methylasparagine. (2R,3E)-phycoerythrobilin contacts are provided by C82 and C158.

The protein belongs to the phycobiliprotein family. Heteromer of 6 alpha, 6 beta and one gamma chain. In terms of processing, contains two covalently linked phycoerythrobilin chromophores and one covalently linked phycourobilin chromophore.

It localises to the plastid. Its subcellular location is the chloroplast thylakoid membrane. Functionally, light-harvesting photosynthetic bile pigment-protein from the phycobiliprotein complex. This is B-phycoerythrin beta chain (cpeB) from Porphyridium sordidum (Red alga).